The following is a 522-amino-acid chain: Maturase K (522 aa).

This sequence belongs to the intron maturase 2 family. MatK subfamily.

Its subcellular location is the plastid. The protein localises to the chloroplast. Usually encoded in the trnK tRNA gene intron. Probably assists in splicing its own and other chloroplast group II introns. In Dianella ensifolia (Flax lily), this protein is Maturase K.